The chain runs to 205 residues: Urease accessory protein UreE (205 aa).

The interval 171–205 (AHEAHPHAHSHAGGHGHVHSGHGHGGKHGEHDAES) is disordered. Positions 177–196 (HAHSHAGGHGHVHSGHGHGG) are enriched in basic residues.

It belongs to the UreE family.

The protein localises to the cytoplasm. Involved in urease metallocenter assembly. Binds nickel. Probably functions as a nickel donor during metallocenter assembly. The polypeptide is Urease accessory protein UreE (Bordetella parapertussis (strain 12822 / ATCC BAA-587 / NCTC 13253)).